We begin with the raw amino-acid sequence, 391 residues long: MAKSKFERTKPHVNIGTIGHVDHGKTSLTAAITKYFGEFKAYDQIDAAPEERARGITISTAHVEYETEKRHYAHVDCPGHADYVKNMITGAAQMDGAILVVSAADGPMPQTREHILLARQVGVPAIVVFLNKVDQVDDAELLELVELEIRELLSKYDFPGDDIPIVKGSALAALEDKDKSIGEDAVRLLMSEVDNYIPTPERPVDQPFLLPIEDVFSISGRGTVVTGRVERGVIKVGEEIEIIGIRPTSKTTVTGVEMFRKLLDQGQAGDNIGALLRGVDREGIERGQVLAKPGSVTPHTRFKAEAYILTKDEGGRHTPFFTNYRPQFYFRTTDVTGIVTLPEGIEMVMPGDNVAMDVSLIVPIAMEEKLRFAIREGGRTVGAGIVSKIIE.

A tr-type G domain is found at 10 to 201 (KPHVNIGTIG…EVDNYIPTPE (192 aa)). The tract at residues 19–26 (GHVDHGKT) is G1. 19-26 (GHVDHGKT) lines the GTP pocket. Residue T26 participates in Mg(2+) binding. The G2 stretch occupies residues 55–59 (GITIS). A G3 region spans residues 76–79 (DCPG). GTP-binding positions include 76–80 (DCPGH) and 131–134 (NKVD). The G4 stretch occupies residues 131-134 (NKVD). The G5 stretch occupies residues 169–171 (SAL).

It belongs to the TRAFAC class translation factor GTPase superfamily. Classic translation factor GTPase family. EF-Tu/EF-1A subfamily. As to quaternary structure, monomer.

It localises to the cytoplasm. The enzyme catalyses GTP + H2O = GDP + phosphate + H(+). GTP hydrolase that promotes the GTP-dependent binding of aminoacyl-tRNA to the A-site of ribosomes during protein biosynthesis. This chain is Elongation factor Tu 1, found in Bartonella quintana (strain Toulouse) (Rochalimaea quintana).